We begin with the raw amino-acid sequence, 577 residues long: Torulene dioxygenase (577 aa).

The interval 1–20 is disordered; it reads MALNGPGVYHRTREHEQEDA. Residues histidine 239, histidine 291, histidine 361, and histidine 570 each coordinate Fe(2+).

The protein belongs to the carotenoid oxygenase family. Fe(2+) is required as a cofactor.

It localises to the cytoplasm. The protein resides in the cytosol. It catalyses the reaction torulene + O2 = 4'-apo-beta-carotenal + 3-methyl-2-butenal. It participates in carotenoid biosynthesis. Functionally, torulene dioxygenase; part of pathway that mediates the biosynthesis of neurosporaxanthin, a carboxylic apocarotenoid acting as an essential protective pigments and leading to orange pigmentation. CarT mediates the cleavage of torulene into beta-apo-4'-carotenal, the aldehyde corresponding to the acidic neurosporaxanthin. Is also active on other monocyclic synthetic substrates such as beta-apo-8'-carotenal and beta-apo-10'-carotenal to produce beta-apo-14'-carotenal and retinal(beta-apo-15'-carotenal), respectively. Neurosporaxanthin is synthesized from geranyl-geranyl pyrophosphate (GGPP) through several enzymatic activities. Phytoene synthase activity performed by the bifunctional enzyme carAR first produces phytoene from geranyl-geranyl pyrophosphate (GGPP). The phytoene dehydrogenase carB then introduces 4 desaturations to lead to lycopene which is substrate of the carotene cyclase activity of carAR that leads to the production of gamma-carotene. CarB then performs a 5th desaturation reaction to yield torulene. Torulene is the substrate of the dioxidase carT that breaks the molecule, removing five carbon atoms to yield beta-apo-4'-carotenal, whereas the aldehyde dehydrogenase carD mediates the last step by converting beta-apo-4'-carotenal into neurosporaxanthin. The protein is Torulene dioxygenase of Gibberella fujikuroi (strain CBS 195.34 / IMI 58289 / NRRL A-6831) (Bakanae and foot rot disease fungus).